The following is a 227-amino-acid chain: Zinc finger protein 511 (227 aa).

3 C2H2-type zinc fingers span residues F80–H105, N107–H130, and Y144–H169. The segment at P180–D204 is disordered. Positions P186 to A198 are enriched in low complexity.

It belongs to the krueppel C2H2-type zinc-finger protein family.

The protein localises to the nucleus. Its function is as follows. May be involved in transcriptional regulation. This is Zinc finger protein 511 (Znf511) from Mus musculus (Mouse).